A 48-amino-acid polypeptide reads, in one-letter code: DNA-directed RNA polymerase subunit Rpo12 (48 aa).

Positions 9, 26, and 29 each coordinate Zn(2+).

The protein belongs to the archaeal Rpo12/eukaryotic RPC10 RNA polymerase subunit family. As to quaternary structure, part of the RNA polymerase complex. It depends on Zn(2+) as a cofactor.

The protein localises to the cytoplasm. It catalyses the reaction RNA(n) + a ribonucleoside 5'-triphosphate = RNA(n+1) + diphosphate. In terms of biological role, DNA-dependent RNA polymerase (RNAP) catalyzes the transcription of DNA into RNA using the four ribonucleoside triphosphates as substrates. The sequence is that of DNA-directed RNA polymerase subunit Rpo12 from Sulfurisphaera tokodaii (strain DSM 16993 / JCM 10545 / NBRC 100140 / 7) (Sulfolobus tokodaii).